Reading from the N-terminus, the 249-residue chain is Hydantoin racemase (249 aa).

This sequence belongs to the HyuE racemase family. Homohexamer.

It carries out the reaction a D-5-monosubstituted hydantoin = a L-5-monosubstituted hydantoin. It catalyses the reaction D-5-[2-(methylsulfanyl)ethyl]hydantoin = L-5-[2-(methysulfanyl)ethyl]hydantoin. The catalysed reaction is D-5-benzylhydantoin = L-5-benzylhydantoin. The enzyme catalyses D-5-isopropylhydantoin = L-5-isopropylhydantoin. It carries out the reaction D-5-isobutylhydantoin = L-5-isobutylhydantoin. Strongly inhibited by Cu(2+) and Zn(2+). Slightly stimulated by the addition of Mn(2+) or Co(2+), but also by metal-chelating agents such as EDTA or EGTA, indicating that the enzyme is not a metalloenzyme. Its function is as follows. Involved in the asymmetric conversion of racemic 5-substituted hydantoins to the corresponding L-amino acids. Catalyzes the racemization via enolization of D- and L-5-monosubstituted hydantoins. Is able to racemize 5-substituted hydantoins having aromatic or aliphatic substituents such as 5-(2-methylthioethyl)hydantoin, 5-isopropylhydantoin, 5-isobutylhydantoin and 5-benzylhydantoin. The chain is Hydantoin racemase from Pseudomonas sp. (strain NS671).